A 200-amino-acid chain; its full sequence is Small ribosomal subunit protein uS4c (200 aa).

Residues 20–42 (GLTRKTTTRTSRPGQHGTQARKP) form a disordered region. A compositionally biased stretch (polar residues) spans 23-37 (RKTTTRTSRPGQHGT). Positions 90–152 (MRLDNVIFRL…PKSQSIVKNY (63 aa)) constitute an S4 RNA-binding domain.

The protein belongs to the universal ribosomal protein uS4 family. As to quaternary structure, part of the 30S ribosomal subunit. Contacts protein S5. The interaction surface between S4 and S5 is involved in control of translational fidelity.

The protein resides in the plastid. The protein localises to the chloroplast. One of the primary rRNA binding proteins, it binds directly to 16S rRNA where it nucleates assembly of the body of the 30S subunit. Its function is as follows. With S5 and S12 plays an important role in translational accuracy. The sequence is that of Small ribosomal subunit protein uS4c (rps4) from Guillardia theta (Cryptophyte).